A 304-amino-acid chain; its full sequence is Glycine--tRNA ligase alpha subunit (304 aa).

It belongs to the class-II aminoacyl-tRNA synthetase family. As to quaternary structure, tetramer of two alpha and two beta subunits.

It localises to the cytoplasm. The enzyme catalyses tRNA(Gly) + glycine + ATP = glycyl-tRNA(Gly) + AMP + diphosphate. The polypeptide is Glycine--tRNA ligase alpha subunit (Vibrio atlanticus (strain LGP32) (Vibrio splendidus (strain Mel32))).